A 190-amino-acid polypeptide reads, in one-letter code: Putative manganese efflux pump MntP (190 aa).

The next 6 membrane-spanning stretches (helical) occupy residues Phe-3–Val-23, Leu-37–Ile-57, His-72–Trp-88, Ile-111–Val-131, Val-138–His-158, and Phe-164–Val-184.

Belongs to the MntP (TC 9.B.29) family.

The protein resides in the cell membrane. Its function is as follows. Probably functions as a manganese efflux pump. This chain is Putative manganese efflux pump MntP, found in Corynebacterium glutamicum (strain R).